Consider the following 604-residue polypeptide: Arginine--tRNA ligase (604 aa).

The 'HIGH' region signature appears at 142–152; it reads PNIAKEMHVGH.

It belongs to the class-I aminoacyl-tRNA synthetase family. In terms of assembly, monomer.

The protein localises to the cytoplasm. It carries out the reaction tRNA(Arg) + L-arginine + ATP = L-arginyl-tRNA(Arg) + AMP + diphosphate. The polypeptide is Arginine--tRNA ligase (Prochlorococcus marinus (strain MIT 9312)).